A 147-amino-acid polypeptide reads, in one-letter code: uncharacterized protein (147 aa).

The region spanning 1–137 (MRDNTIGSLI…LYELMTKVHK (137 aa)) is the HTH marR-type domain. Positions 53–76 (QMELAEKVTVTQGGISRMLTRLEK) form a DNA-binding region, H-T-H motif.

This is an uncharacterized protein from Bacillus anthracis.